The following is a 262-amino-acid chain: Transcription factor Adf-1 (262 aa).

The segment at residues 24-104 (NLIEAVKLNP…QMQFLVDSIR (81 aa)) is a DNA-binding region (MADF). Residues 217–256 (SAEDQSFGMVVTDMLNTLGVRQKAEAKVHIIKYLTDMQLL) form the BESS domain.

Post-translationally, O-glycosylated; contains N-acetylglucosamine side chains.

Its subcellular location is the nucleus. Its function is as follows. May play an important role not only in the regulation of Adh expression but also in the transcription of other genes. The polypeptide is Transcription factor Adf-1 (Adf1) (Drosophila melanogaster (Fruit fly)).